The chain runs to 269 residues: Shikimate dehydrogenase (NADP(+)) (269 aa).

Residues 17–19 and Thr64 each bind shikimate; that span reads SKS. The active-site Proton acceptor is Lys68. An NADP(+)-binding site is contributed by Asp80. Asn89 and Asp105 together coordinate shikimate. Residues 130–134, 154–159, and Met213 each bind NADP(+); these read GAGGA and NRTRAK. Tyr215 is a binding site for shikimate. Gly237 lines the NADP(+) pocket.

This sequence belongs to the shikimate dehydrogenase family. Homodimer.

The enzyme catalyses shikimate + NADP(+) = 3-dehydroshikimate + NADPH + H(+). It participates in metabolic intermediate biosynthesis; chorismate biosynthesis; chorismate from D-erythrose 4-phosphate and phosphoenolpyruvate: step 4/7. Its function is as follows. Involved in the biosynthesis of the chorismate, which leads to the biosynthesis of aromatic amino acids. Catalyzes the reversible NADPH linked reduction of 3-dehydroshikimate (DHSA) to yield shikimate (SA). In Neisseria gonorrhoeae (strain ATCC 700825 / FA 1090), this protein is Shikimate dehydrogenase (NADP(+)).